Here is a 1430-residue protein sequence, read N- to C-terminus: Nephrocystin-4 (1430 aa).

The interval 824–1430 is sufficient for basal bodies localization; sequence MRMGNVGRPP…ETFCVKVRYE (607 aa). Positions 828-857 are disordered; it reads NVGRPPEKKLKRRETLPPSNSRIITMHDGR.

It belongs to the NPHP4 family.

It localises to the cytoplasm. Its subcellular location is the cytoskeleton. The protein resides in the cilium basal body. In terms of biological role, involved in the organization of apical junctions. Required for building functional cilia. Involved in the organization of the subapical actin network in multiciliated epithelial cells. Seems to recruit int to basal bodies of motile cilia which subsequently interacts with actin-modifying proteins such as daam1. May down-regulate the canonical Wnt pathway and promote the Wnt-PCP pathway. Acts as a negative regulator of the hippo pathway. The sequence is that of Nephrocystin-4 (nphp4) from Xenopus laevis (African clawed frog).